A 334-amino-acid chain; its full sequence is DNA-directed RNA polymerase subunit alpha (334 aa).

An alpha N-terminal domain (alpha-NTD) region spans residues 1–231 (MQSNTFLTPR…EQLSVFADLK (231 aa)). Residues 245–334 (IDPVLLRPVD…GKKDTSHAAP (90 aa)) are alpha C-terminal domain (alpha-CTD).

Belongs to the RNA polymerase alpha chain family. In terms of assembly, homodimer. The RNAP catalytic core consists of 2 alpha, 1 beta, 1 beta' and 1 omega subunit. When a sigma factor is associated with the core the holoenzyme is formed, which can initiate transcription.

It carries out the reaction RNA(n) + a ribonucleoside 5'-triphosphate = RNA(n+1) + diphosphate. Its function is as follows. DNA-dependent RNA polymerase catalyzes the transcription of DNA into RNA using the four ribonucleoside triphosphates as substrates. The chain is DNA-directed RNA polymerase subunit alpha from Nitrosospira multiformis (strain ATCC 25196 / NCIMB 11849 / C 71).